Here is a 288-residue protein sequence, read N- to C-terminus: Protein RepA (288 aa).

This sequence belongs to the initiator RepB protein family.

This protein is essential for plasmid replication; it is involved in copy control functions. This Escherichia coli protein is Protein RepA (repA).